The chain runs to 172 residues: EPLLDSEGELVRNGGTYYLLPDRWALGGGIEAAATGTETCPLTVVRSPNEVSVGEPLRISSQLRSGFIPDYSVVRIGFANPPKCAPSPWWTVVEDQPQQPSVKLSELKSTKFDYLFKFEKVTSKFSSYKLKYCAKRDTCKDIGIYRDQKGYERLVVTDENPLVVIFKKVESS.

2 disulfide bridges follow: Cys40–Cys84 and Cys133–Cys139.

It belongs to the protease inhibitor I3 (leguminous Kunitz-type inhibitor) family.

In terms of biological role, WTI-1B inhibits trypsin stoichiometrically. This Psophocarpus tetragonolobus (Winged bean) protein is Trypsin inhibitor 1A.